The chain runs to 394 residues: Alcohol dehydrogenase-like 3 (394 aa).

Zn(2+) is bound by residues cysteine 48, threonine 50, histidine 71, cysteine 101, cysteine 104, cysteine 107, cysteine 115, and cysteine 188. An alcohol is bound by residues threonine 50 and histidine 71. Threonine 50 serves as a coordination point for NAD(+). NAD(+)-binding positions include 213–218, aspartate 237, lysine 242, threonine 283, valine 306, 306–308, phenylalanine 333, and arginine 383; these read GLGSVG and VGI.

It belongs to the zinc-containing alcohol dehydrogenase family. Class-III subfamily. Homodimer. Zn(2+) is required as a cofactor.

It localises to the cytoplasm. It catalyses the reaction a primary alcohol + NAD(+) = an aldehyde + NADH + H(+). It carries out the reaction a secondary alcohol + NAD(+) = a ketone + NADH + H(+). The chain is Alcohol dehydrogenase-like 3 from Arabidopsis thaliana (Mouse-ear cress).